The chain runs to 610 residues: MSEIFDAKAFLKTVTSQPGVYRMYDAGGTVIYVGKAKDLKKRLSSYFRSNLASRKTEALVAQIQHIDVTVTHTETEALLLEHNYIKLYQPRYNVLLRDDKSYPFIFLSGDTHPRLAMHRGAKHAKGEYFGPFPNGYAVRETLALLQKIFPIRQCENSVYRNRSRPCLQYQIGRCLGPCVAGLVSEEEYAQQVEYVRLFLSGKDDQVLTQLIARMEKASQDLAFEEAARIRDQIQAVRRVTEKQFVSNAGDDLDVIGVAFDAGMACVHVLFIRQGKVLGSRSYFPKVPGGTELGEVVETFVGQFYLQGSQMRTLPGEILLDFNLSDKTLLADSLSELAGRSIHVQTKPRGDRARYLKLARTNAATALITKLSQQSTITQRLTALAAVLKLPAIKRMECFDISHTMGEQTVASCVVFDANGPLRAEYRRYNIAGITPGDDYAAMNQVLRRRYGKAIEESKIPDVILIDGGKGQLAQAKAVFAELDVPWDKHRPLLLGVAKGADRKAGLEILFFEPEGEGFSLPPDSPALHVIQHIRDESHDHAIGGHRKKRAKVKNTSTLETIEGVGPKRRQMLLKYMGGLQGLRNASVEEIAKVPGISQGLAEKIFWSLKH.

Positions 16 to 94 (SQPGVYRMYD…IKLYQPRYNV (79 aa)) constitute a GIY-YIG domain. Residues 204-239 (DQVLTQLIARMEKASQDLAFEEAARIRDQIQAVRRV) enclose the UVR domain.

The protein belongs to the UvrC family. In terms of assembly, interacts with UvrB in an incision complex.

It is found in the cytoplasm. In terms of biological role, the UvrABC repair system catalyzes the recognition and processing of DNA lesions. UvrC both incises the 5' and 3' sides of the lesion. The N-terminal half is responsible for the 3' incision and the C-terminal half is responsible for the 5' incision. The protein is UvrABC system protein C of Salmonella gallinarum (strain 287/91 / NCTC 13346).